Consider the following 137-residue polypeptide: Large ribosomal subunit protein uL16c (137 aa).

The protein belongs to the universal ribosomal protein uL16 family. As to quaternary structure, part of the 50S ribosomal subunit.

The protein localises to the plastid. In Helicosporidium sp. subsp. Simulium jonesii (Green alga), this protein is Large ribosomal subunit protein uL16c (rpl16).